We begin with the raw amino-acid sequence, 66 residues long: ATP synthase F(0) complex subunit 8 (66 aa).

A helical membrane pass occupies residues isoleucine 8–leucine 24. Lysine 54 is modified (N6-acetyllysine; alternate). Lysine 54 carries the N6-succinyllysine; alternate modification. N6-acetyllysine is present on lysine 57.

This sequence belongs to the ATPase protein 8 family. In terms of assembly, component of the ATP synthase complex composed at least of ATP5F1A/subunit alpha, ATP5F1B/subunit beta, ATP5MC1/subunit c (homooctomer), MT-ATP6/subunit a, MT-ATP8/subunit 8, ATP5ME/subunit e, ATP5MF/subunit f, ATP5MG/subunit g, ATP5MK/subunit k, ATP5MJ/subunit j, ATP5F1C/subunit gamma, ATP5F1D/subunit delta, ATP5F1E/subunit epsilon, ATP5PF/subunit F6, ATP5PB/subunit b, ATP5PD/subunit d, ATP5PO/subunit OSCP. ATP synthase complex consists of a soluble F(1) head domain (subunits alpha(3) and beta(3)) - the catalytic core - and a membrane F(0) domain - the membrane proton channel (subunits c, a, 8, e, f, g, k and j). These two domains are linked by a central stalk (subunits gamma, delta, and epsilon) rotating inside the F1 region and a stationary peripheral stalk (subunits F6, b, d, and OSCP). Interacts with PRICKLE3.

The protein resides in the mitochondrion membrane. Its function is as follows. Subunit 8, of the mitochondrial membrane ATP synthase complex (F(1)F(0) ATP synthase or Complex V) that produces ATP from ADP in the presence of a proton gradient across the membrane which is generated by electron transport complexes of the respiratory chain. ATP synthase complex consist of a soluble F(1) head domain - the catalytic core - and a membrane F(1) domain - the membrane proton channel. These two domains are linked by a central stalk rotating inside the F(1) region and a stationary peripheral stalk. During catalysis, ATP synthesis in the catalytic domain of F(1) is coupled via a rotary mechanism of the central stalk subunits to proton translocation. In vivo, can only synthesize ATP although its ATP hydrolase activity can be activated artificially in vitro. Part of the complex F(0) domain. The protein is ATP synthase F(0) complex subunit 8 of Mammuthus primigenius (Siberian woolly mammoth).